A 284-amino-acid chain; its full sequence is Citrate lyase subunit beta-like protein (284 aa).

R74 and E129 together coordinate substrate. Mg(2+) is bound by residues E129 and D155.

The protein belongs to the HpcH/HpaI aldolase family. Citrate lyase beta subunit-like subfamily. In terms of assembly, homotrimer. Requires Mg(2+) as cofactor.

May play a role in fatty acid biosynthesis. The polypeptide is Citrate lyase subunit beta-like protein (Deinococcus radiodurans (strain ATCC 13939 / DSM 20539 / JCM 16871 / CCUG 27074 / LMG 4051 / NBRC 15346 / NCIMB 9279 / VKM B-1422 / R1)).